Reading from the N-terminus, the 566-residue chain is Proline--tRNA ligase 1 (566 aa).

The protein belongs to the class-II aminoacyl-tRNA synthetase family. ProS type 1 subfamily. Homodimer.

The protein resides in the cytoplasm. It catalyses the reaction tRNA(Pro) + L-proline + ATP = L-prolyl-tRNA(Pro) + AMP + diphosphate. Catalyzes the attachment of proline to tRNA(Pro) in a two-step reaction: proline is first activated by ATP to form Pro-AMP and then transferred to the acceptor end of tRNA(Pro). As ProRS can inadvertently accommodate and process non-cognate amino acids such as alanine and cysteine, to avoid such errors it has two additional distinct editing activities against alanine. One activity is designated as 'pretransfer' editing and involves the tRNA(Pro)-independent hydrolysis of activated Ala-AMP. The other activity is designated 'posttransfer' editing and involves deacylation of mischarged Ala-tRNA(Pro). The misacylated Cys-tRNA(Pro) is not edited by ProRS. The chain is Proline--tRNA ligase 1 from Bacillus cereus (strain ZK / E33L).